The following is a 114-amino-acid chain: Macrophage migration inhibitory factor homolog (114 aa).

The active-site Proton acceptor; via imino nitrogen is the Pro2. Positions 33 and 98 each coordinate substrate.

Belongs to the MIF family.

It localises to the secreted. The enzyme catalyses L-dopachrome = 5,6-dihydroxyindole-2-carboxylate. It carries out the reaction 3-phenylpyruvate = enol-phenylpyruvate. In terms of biological role, tautomerization of the methyl ester of L-dopachrome. Inhibits migration of human peripheral blood mononuclear cells. This chain is Macrophage migration inhibitory factor homolog, found in Trichuris trichiura (Whipworm).